The sequence spans 203 residues: Large ribosomal subunit protein bL25 (203 aa).

It belongs to the bacterial ribosomal protein bL25 family. CTC subfamily. In terms of assembly, part of the 50S ribosomal subunit; part of the 5S rRNA/L5/L18/L25 subcomplex. Contacts the 5S rRNA. Binds to the 5S rRNA independently of L5 and L18.

Functionally, this is one of the proteins that binds to the 5S RNA in the ribosome where it forms part of the central protuberance. This chain is Large ribosomal subunit protein bL25, found in Rickettsia typhi (strain ATCC VR-144 / Wilmington).